The chain runs to 188 residues: Ribosome-recycling factor (188 aa).

This sequence belongs to the RRF family.

The protein localises to the cytoplasm. In terms of biological role, responsible for the release of ribosomes from messenger RNA at the termination of protein biosynthesis. May increase the efficiency of translation by recycling ribosomes from one round of translation to another. The protein is Ribosome-recycling factor of Gluconacetobacter diazotrophicus (strain ATCC 49037 / DSM 5601 / CCUG 37298 / CIP 103539 / LMG 7603 / PAl5).